The primary structure comprises 241 residues: Homeobox protein TGIF2LX (241 aa).

Disordered regions lie at residues 1 to 58 (MEAA…GNLP) and 127 to 207 (GKGA…ELVS). The segment covering 10-39 (ETQSPVQKDSPAKTQSPAQDTSIMSRNNAD) has biased composition (polar residues). Positions 48–111 (EHKKKRKGNL…INARRRILPD (64 aa)) form a DNA-binding region, homeobox; TALE-type.

Belongs to the TALE/TGIF homeobox family.

The protein resides in the nucleus. Functionally, may have a transcription role in testis. This is Homeobox protein TGIF2LX (TGIF2LX) from Pan paniscus (Pygmy chimpanzee).